A 466-amino-acid polypeptide reads, in one-letter code: Asparagine--tRNA ligase (466 aa).

This sequence belongs to the class-II aminoacyl-tRNA synthetase family. In terms of assembly, homodimer.

Its subcellular location is the cytoplasm. The catalysed reaction is tRNA(Asn) + L-asparagine + ATP = L-asparaginyl-tRNA(Asn) + AMP + diphosphate + H(+). The polypeptide is Asparagine--tRNA ligase (Salmonella typhimurium (strain LT2 / SGSC1412 / ATCC 700720)).